Consider the following 472-residue polypeptide: Forkhead box protein H1 (472 aa).

The disordered stretch occupies residues 36–56 (SSKRSCHRSSNPLLELGGRLD). The fork-head DNA-binding region spans 97 to 193 (KPPYSYLAMI…LKRQNTAVSR (97 aa)). Disordered regions lie at residues 211-246 (YSQPNKSKPLPPESSLPPVPTRQSPPPSEDPYRPKL) and 261-360 (PASS…LPTS). Residues 219–239 (PLPPESSLPPVPTRQSPPPSE) show a composition bias toward pro residues. The span at 294 to 310 (ASYNGSSSASSVSPASD) shows a compositional bias: low complexity. Residues 339-465 (SCPPPNKSSK…PNQYALQNGP (127 aa)) are SMAD-interaction domain (SID). The Fast/FoxH1 motif 1 (FM1) motif lies at 357–361 (LPTSY). Positions 367–373 (PNAVAPP) match the Fast/FoxH1 motif 2 (FM2) motif. An SMAD interaction motif (SIM) motif is present at residues 428–448 (LDSMLQSVPPNKSVFDALGSN).

Its subcellular location is the nucleus. In terms of biological role, transcriptional activator. Activates an activin response element (ARE). Recognizes and binds to the DNA sequence 5'-TGT[GT][GT]ATT-3'. Modulator of nodal signaling required for organizer formation. Also required for the development of dorsal axial structures and left-right symmetry. This chain is Forkhead box protein H1 (foxh1), found in Danio rerio (Zebrafish).